Reading from the N-terminus, the 738-residue chain is Melanotransferrin (738 aa).

A signal peptide spans 1–19 (MRLLSVTFWLLLSLRTVVC). Transferrin-like domains lie at 23–357 (VQWC…GLLC) and 366–706 (LRWC…GMLS). 2 disulfides stabilise this stretch: cysteine 26-cysteine 63 and cysteine 36-cysteine 54. Residues aspartate 78 and tyrosine 107 each contribute to the Fe(3+) site. A glycan (N-linked (GlcNAc...) asparagine) is linked at asparagine 118. 4 disulfides stabilise this stretch: cysteine 130–cysteine 216, cysteine 172–cysteine 189, cysteine 186–cysteine 199, and cysteine 257–cysteine 271. Threonine 132 serves as a coordination point for hydrogencarbonate. Residue asparagine 135 is glycosylated (N-linked (GlcNAc...) asparagine). Positions 136, 138, and 139 each coordinate hydrogencarbonate. Tyrosine 210 is a binding site for Fe(3+). Fe(3+) is bound by residues histidine 279 and tyrosine 451. Position 462 is a phosphoserine (serine 462). Residue asparagine 515 is glycosylated (N-linked (GlcNAc...) asparagine). Positions 556 and 625 each coordinate Fe(3+). Cysteine 709 is lipidated: GPI-anchor amidated cysteine. The propeptide at 710–738 (SGAGAAVQRVPLLALLLLTLAAGLLPRVL) is removed in mature form.

The protein belongs to the transferrin family.

It is found in the cell membrane. Involved in iron cellular uptake. Seems to be internalized and then recycled back to the cell membrane. Binds a single atom of iron per subunit. Could also bind zinc. The chain is Melanotransferrin (Meltf) from Mus musculus (Mouse).